A 546-amino-acid chain; its full sequence is Plastidic glucose transporter 4 (546 aa).

12 consecutive transmembrane segments (helical) span residues 105-125, 148-168, 182-202, 205-225, 240-260, 265-285, 345-365, 381-401, 410-430, 441-461, 477-497, and 503-523; these read VLPFVGVACLGAILFGYHLGV, WIVSSLLAGATVGSFTGGALA, IPLAIGAFLCATAQSVQTMIV, LLAGIGIGISSAIVPLYISEI, LFICIGILAALIAGLPLAANP, TMFGVAVIPSVLLAIGMAFSP, VVSVGAALFLFQQLAGINAVV, VAASALVGASNVFGTAVASSL, LLLTSFGGMALSMLLLSLSFT, LAVVGTVLYVLSFSLGAGPVP, AVALSLGMHWISNFVIGLYFL, and FGISSVYLGFAGVCVLAVLYI.

Belongs to the major facilitator superfamily. Sugar transporter (TC 2.A.1.1) family.

The protein resides in the plastid. It localises to the chloroplast inner membrane. May be involved in the efflux of glucose towards the cytosol. In Arabidopsis thaliana (Mouse-ear cress), this protein is Plastidic glucose transporter 4.